The sequence spans 212 residues: Tubulin alpha chain (212 aa).

Positions 3 and 25 each coordinate GTP. Glutamate 51 is a catalytic residue.

This sequence belongs to the tubulin family. In terms of assembly, dimer of alpha and beta chains. A typical microtubule is a hollow water-filled tube with an outer diameter of 25 nm and an inner diameter of 15 nM. Alpha-beta heterodimers associate head-to-tail to form protofilaments running lengthwise along the microtubule wall with the beta-tubulin subunit facing the microtubule plus end conferring a structural polarity. Microtubules usually have 13 protofilaments but different protofilament numbers can be found in some organisms and specialized cells. It depends on Mg(2+) as a cofactor.

Its subcellular location is the cytoplasm. The protein resides in the cytoskeleton. The catalysed reaction is GTP + H2O = GDP + phosphate + H(+). Functionally, tubulin is the major constituent of microtubules, a cylinder consisting of laterally associated linear protofilaments composed of alpha- and beta-tubulin heterodimers. Microtubules grow by the addition of GTP-tubulin dimers to the microtubule end, where a stabilizing cap forms. Below the cap, tubulin dimers are in GDP-bound state, owing to GTPase activity of alpha-tubulin. The sequence is that of Tubulin alpha chain (TUB-A) from Pneumocystis carinii.